Here is a 240-residue protein sequence, read N- to C-terminus: Putative RING finger protein ORF96 (240 aa).

The segment at 9–44 (CVVCMEEKPLVVFEPCMHHNCCESCSGHVSNCPYCR) adopts an RING-type 1 zinc-finger fold. The segment at 150–202 (CVICKKEIKEEVGKTYMHACCTATICKPCAKAILKAMVEKEITENLPFCPYCF) adopts an RING-type 2; degenerate zinc-finger fold.

This is Putative RING finger protein ORF96 from Ostreid herpesvirus 1 (isolate France) (OsHV-1).